A 94-amino-acid chain; its full sequence is Pyrimidine/purine nucleoside phosphorylase (94 aa).

The protein belongs to the nucleoside phosphorylase PpnP family.

The enzyme catalyses a purine D-ribonucleoside + phosphate = a purine nucleobase + alpha-D-ribose 1-phosphate. It carries out the reaction adenosine + phosphate = alpha-D-ribose 1-phosphate + adenine. It catalyses the reaction cytidine + phosphate = cytosine + alpha-D-ribose 1-phosphate. The catalysed reaction is guanosine + phosphate = alpha-D-ribose 1-phosphate + guanine. The enzyme catalyses inosine + phosphate = alpha-D-ribose 1-phosphate + hypoxanthine. It carries out the reaction thymidine + phosphate = 2-deoxy-alpha-D-ribose 1-phosphate + thymine. It catalyses the reaction uridine + phosphate = alpha-D-ribose 1-phosphate + uracil. The catalysed reaction is xanthosine + phosphate = alpha-D-ribose 1-phosphate + xanthine. Functionally, catalyzes the phosphorolysis of diverse nucleosides, yielding D-ribose 1-phosphate and the respective free bases. Can use uridine, adenosine, guanosine, cytidine, thymidine, inosine and xanthosine as substrates. Also catalyzes the reverse reactions. This chain is Pyrimidine/purine nucleoside phosphorylase, found in Pectobacterium carotovorum subsp. carotovorum (strain PC1).